A 304-amino-acid chain; its full sequence is Probable WRKY transcription factor 13 (304 aa).

Residues 141–190 (QKNNHGSEIDVDDNDDEVGDGGGINDDDNGRHHHHDTPSRHDKHNTASLG) are disordered. Over residues 149–159 (IDVDDNDDEVG) the composition is skewed to acidic residues. A DNA-binding region (WRKY) is located at residues 217–282 (SEVDVLDDGY…YEGRHLHSPS (66 aa)).

The protein belongs to the WRKY group II-c family.

It is found in the nucleus. Functionally, transcription factor. Interacts specifically with the W box (5'-(T)TGAC[CT]-3'), a frequently occurring elicitor-responsive cis-acting element. This chain is Probable WRKY transcription factor 13 (WRKY13), found in Arabidopsis thaliana (Mouse-ear cress).